Consider the following 393-residue polypeptide: Putative odorant receptor 69a, isoform A (393 aa).

The Cytoplasmic segment spans residues 1–39; the sequence is MQLHDHMKYIDLGCKMACIPRYQWKGRPTERQFYASEQR. A helical transmembrane segment spans residues 40–60; sequence IVFLLGTICQIFQITGVLIYW. Residues 61-76 are Extracellular-facing; it reads YCNGRLATETGTFVAQ. The chain crosses the membrane as a helical span at residues 77-97; sequence LSEMCSSFCLTFVGFCNVYAI. Over 98 to 139 the chain is Cytoplasmic; that stretch reads STNRNQIETLLEELHQIYPRYRKNHYRCQHYFDMAMTIMRIE. The chain crosses the membrane as a helical span at residues 140-160; the sequence is FLFYMILYVYYNSAPLWVLLW. The Extracellular portion of the chain corresponds to 161–189; it reads EHLHEEYDLSFKTQTNTWFPWKVHGSALG. Residues 190–210 traverse the membrane as a helical segment; that stretch reads FGMAVLSITVGSFVGVGFSIV. Topologically, residues 211 to 269 are cytoplasmic; the sequence is TQNLICLLTFQLKLHYDGISSQLVSLDCRRPGAHKELSILIAHHSRILQLGDQVNDIMN. The helical transmembrane segment at 270-290 threads the bilayer; that stretch reads FVFGSSLVGATIAICMSSVSI. Topologically, residues 291–304 are extracellular; that stretch reads MLLDLASAFKYASG. A helical transmembrane segment spans residues 305-325; the sequence is LVAFVLYNFVICYMGTEVTLA. Residues 326 to 365 are Cytoplasmic-facing; sequence SGKVLPAAFYNNWYEGDLVYRRMLLILMMRATKPYMWKTY. A helical transmembrane segment spans residues 366–386; the sequence is KLAPVSITTYMATLKFSYQMF. Residues 387–393 lie on the Extracellular side of the membrane; it reads TCVRSLK.

Belongs to the insect chemoreceptor superfamily. Heteromeric odorant receptor channel (TC 1.A.69) family. Or49a subfamily. As to quaternary structure, interacts with Orco. Complexes exist early in the endomembrane system in olfactory sensory neurons (OSNs), coupling these complexes to the conserved ciliary trafficking pathway. In terms of tissue distribution, expressed in olfactory sensory neurons in the antenna.

It localises to the cell membrane. Its function is as follows. Odorant receptor which mediates acceptance or avoidance behavior, depending on its substrates. The odorant receptor repertoire encodes a large collection of odor stimuli that vary widely in identity, intensity, and duration. May form a complex with Orco to form odorant-sensing units, providing sensitive and prolonged odorant signaling and calcium permeability. This is Putative odorant receptor 69a, isoform A (Or69a) from Drosophila melanogaster (Fruit fly).